The following is a 264-amino-acid chain: Acyl-[acyl-carrier-protein]--UDP-N-acetylglucosamine O-acyltransferase (264 aa).

This sequence belongs to the transferase hexapeptide repeat family. LpxA subfamily. Homotrimer.

The protein resides in the cytoplasm. The enzyme catalyses a (3R)-hydroxyacyl-[ACP] + UDP-N-acetyl-alpha-D-glucosamine = a UDP-3-O-[(3R)-3-hydroxyacyl]-N-acetyl-alpha-D-glucosamine + holo-[ACP]. It functions in the pathway glycolipid biosynthesis; lipid IV(A) biosynthesis; lipid IV(A) from (3R)-3-hydroxytetradecanoyl-[acyl-carrier-protein] and UDP-N-acetyl-alpha-D-glucosamine: step 1/6. Involved in the biosynthesis of lipid A, a phosphorylated glycolipid that anchors the lipopolysaccharide to the outer membrane of the cell. The protein is Acyl-[acyl-carrier-protein]--UDP-N-acetylglucosamine O-acyltransferase of Rickettsia conorii (strain ATCC VR-613 / Malish 7).